Consider the following 56-residue polypeptide: Large ribosomal subunit protein bL33 (56 aa).

The protein belongs to the bacterial ribosomal protein bL33 family.

The sequence is that of Large ribosomal subunit protein bL33 from Acidovorax sp. (strain JS42).